Consider the following 425-residue polypeptide: MKLILNKEELLDKYSRRKAVEEDIEQQVRKILNEVASSGDEALIEYAREFDGFKGDLSNLKVSEEEIDKAYREVDDGFLNSLRKAIQRVFDFHQKQLPRSWFTTEENGNILGQIYTPVEVAGIYVPGGTAAYPSSVVMNAVPAKVAGVKRIVMVSPQKGERMNPYVLVAAREAGVTEIYRVGGAHAIAALAFGTKTIPRVDVITGPGNIYVTIAKKLVYGTVNIDMLAGPSEVVVIADSSAKPEYLAADMLSQAEHDSLASGVVITWDGELARKTAQKVEEYLKLLPRREIILKALENCGGIVVVDDEEEALQLANQLAPEHLELMLPNPFGYLAKVKNAGAVFLGQFSPEPMGDYLAGPNHVLPTSGTSRFYSPLSVDNFLKKSSVIYYSQEGFLADARDVIKLAETEGLFAHALSVKVRISNE.

Residues Ser231, Gln253, and His256 each contribute to the substrate site. The Zn(2+) site is built by Gln253 and His256. Active-site proton acceptor residues include Glu321 and His322. Substrate is bound by residues His322, Asp355, Glu409, and His414. Asp355 contacts Zn(2+). His414 serves as a coordination point for Zn(2+).

Belongs to the histidinol dehydrogenase family. It depends on Zn(2+) as a cofactor.

It catalyses the reaction L-histidinol + 2 NAD(+) + H2O = L-histidine + 2 NADH + 3 H(+). It participates in amino-acid biosynthesis; L-histidine biosynthesis; L-histidine from 5-phospho-alpha-D-ribose 1-diphosphate: step 9/9. In terms of biological role, catalyzes the sequential NAD-dependent oxidations of L-histidinol to L-histidinaldehyde and then to L-histidine. This chain is Histidinol dehydrogenase, found in Carboxydothermus hydrogenoformans (strain ATCC BAA-161 / DSM 6008 / Z-2901).